The sequence spans 109 residues: Large ribosomal subunit protein uL22 (109 aa).

It belongs to the universal ribosomal protein uL22 family. In terms of assembly, part of the 50S ribosomal subunit.

Its function is as follows. This protein binds specifically to 23S rRNA; its binding is stimulated by other ribosomal proteins, e.g. L4, L17, and L20. It is important during the early stages of 50S assembly. It makes multiple contacts with different domains of the 23S rRNA in the assembled 50S subunit and ribosome. Functionally, the globular domain of the protein is located near the polypeptide exit tunnel on the outside of the subunit, while an extended beta-hairpin is found that lines the wall of the exit tunnel in the center of the 70S ribosome. The chain is Large ribosomal subunit protein uL22 from Paraburkholderia phymatum (strain DSM 17167 / CIP 108236 / LMG 21445 / STM815) (Burkholderia phymatum).